We begin with the raw amino-acid sequence, 356 residues long: Alanine racemase (356 aa).

Residue Lys-35 is the Proton acceptor; specific for D-alanine of the active site. Lys-35 is modified (N6-(pyridoxal phosphate)lysine). Residue Arg-130 participates in substrate binding. Residue Tyr-253 is the Proton acceptor; specific for L-alanine of the active site. Met-301 provides a ligand contact to substrate.

Belongs to the alanine racemase family. Requires pyridoxal 5'-phosphate as cofactor.

It catalyses the reaction L-alanine = D-alanine. Its pathway is amino-acid biosynthesis; D-alanine biosynthesis; D-alanine from L-alanine: step 1/1. Functionally, catalyzes the interconversion of L-alanine and D-alanine. May also act on other amino acids. This is Alanine racemase (alr) from Sodalis glossinidius (strain morsitans).